Reading from the N-terminus, the 659-residue chain is MGEFKIQSKFKPTGDQPKAIDTLVQSIENGNRGQTLLGVTGSGKTFTMANIIERTQKPTLILAHNKTLAAQLCAEFKEFFPDNIVEYFVSYYDYYQPEAYVPQTDTFIEKDASINDEIDKLRHSATSALLERRDVIIVASVSCIYGLGNPEEYKKLTISLRPGMIKDRDEVIKKLIEIQYERNDIDFARGTFRVRGDNLDIIPSSSSSKGIRIEFFGDEIDRIREFDVLTGNIIGERQHVSITPASHFAASEETLEKSISIIEDELEDRLKVLTAEDKILEAQRLKQRTNYDIEMIREMGYCQGIENYSRILDGRMPGTPPQTLLDYFPEDFLMFIDESHVTLPQVRAMYAGDRSRKTSLVEFGFRLPCAFDNRPLKFSEFESKINQVVFVSATPGEYELDHSEIVAEQIIRPTGLLDPVIEIRPIKGQIDDLYGEIQRTVQRGFRVLITTLTKRMAEDLTKYLKDLNVKATYMHSDIDTLERMKIIRELRLGEVDVLIGINLLREGLDIPEVALVAILDADKEGFLRSETSLIQTIGRAARNSESKVIMYADNITKSMDKSIKETERRRVIQMEYNEEHNITPTTVIKGVRDIIEATKVSEEKENYESEVKKAAKKDIPIEKLIEQYEEEMKEAAKNLQFERAAELRDIIKDLKENSK.

The Helicase ATP-binding domain occupies 25 to 182; the sequence is QSIENGNRGQ…KKLIEIQYER (158 aa). Residue 38-45 participates in ATP binding; sequence GVTGSGKT. A Beta-hairpin motif is present at residues 91–114; it reads YYDYYQPEAYVPQTDTFIEKDASI. A Helicase C-terminal domain is found at 429–582; sequence QIDDLYGEIQ…QMEYNEEHNI (154 aa). In terms of domain architecture, UVR spans 622–657; the sequence is EKLIEQYEEEMKEAAKNLQFERAAELRDIIKDLKEN.

It belongs to the UvrB family. As to quaternary structure, forms a heterotetramer with UvrA during the search for lesions. Interacts with UvrC in an incision complex.

Its subcellular location is the cytoplasm. Its function is as follows. The UvrABC repair system catalyzes the recognition and processing of DNA lesions. A damage recognition complex composed of 2 UvrA and 2 UvrB subunits scans DNA for abnormalities. Upon binding of the UvrA(2)B(2) complex to a putative damaged site, the DNA wraps around one UvrB monomer. DNA wrap is dependent on ATP binding by UvrB and probably causes local melting of the DNA helix, facilitating insertion of UvrB beta-hairpin between the DNA strands. Then UvrB probes one DNA strand for the presence of a lesion. If a lesion is found the UvrA subunits dissociate and the UvrB-DNA preincision complex is formed. This complex is subsequently bound by UvrC and the second UvrB is released. If no lesion is found, the DNA wraps around the other UvrB subunit that will check the other stand for damage. In Clostridium perfringens (strain SM101 / Type A), this protein is UvrABC system protein B.